A 491-amino-acid chain; its full sequence is Anthranilate synthase component 1 (491 aa).

L-tryptophan is bound by residues Ser-49 and 271–273; that span reads PYL. 306–307 contributes to the chorismate binding site; the sequence is GT. Residue Glu-333 coordinates Mg(2+). Chorismate contacts are provided by residues Tyr-421, Arg-441, 455–457, and Gly-457; that span reads GAG. Glu-470 lines the Mg(2+) pocket.

This sequence belongs to the anthranilate synthase component I family. In terms of assembly, heterotetramer consisting of two non-identical subunits: a beta subunit (TrpG) and a large alpha subunit (TrpE). Mg(2+) is required as a cofactor.

The catalysed reaction is chorismate + L-glutamine = anthranilate + pyruvate + L-glutamate + H(+). It participates in amino-acid biosynthesis; L-tryptophan biosynthesis; L-tryptophan from chorismate: step 1/5. Its activity is regulated as follows. Feedback inhibited by tryptophan. Its function is as follows. Part of a heterotetrameric complex that catalyzes the two-step biosynthesis of anthranilate, an intermediate in the biosynthesis of L-tryptophan. In the first step, the glutamine-binding beta subunit (TrpG) of anthranilate synthase (AS) provides the glutamine amidotransferase activity which generates ammonia as a substrate that, along with chorismate, is used in the second step, catalyzed by the large alpha subunit of AS (TrpE) to produce anthranilate. In the absence of TrpG, TrpE can synthesize anthranilate directly from chorismate and high concentrations of ammonia. This chain is Anthranilate synthase component 1 (trpE), found in Neisseria meningitidis serogroup A / serotype 4A (strain DSM 15465 / Z2491).